Consider the following 121-residue polypeptide: Small ribosomal subunit protein uS13 (121 aa).

The segment at 94–121 (GLPMRGQRTRTNARTRKGPRKAAAALKK) is disordered.

The protein belongs to the universal ribosomal protein uS13 family. As to quaternary structure, part of the 30S ribosomal subunit. Forms a loose heterodimer with protein S19. Forms two bridges to the 50S subunit in the 70S ribosome.

In terms of biological role, located at the top of the head of the 30S subunit, it contacts several helices of the 16S rRNA. In the 70S ribosome it contacts the 23S rRNA (bridge B1a) and protein L5 of the 50S subunit (bridge B1b), connecting the 2 subunits; these bridges are implicated in subunit movement. Contacts the tRNAs in the A and P-sites. This Polaromonas sp. (strain JS666 / ATCC BAA-500) protein is Small ribosomal subunit protein uS13.